The sequence spans 37 residues: MKIRASVRKICEKCRLIRRRGRIRVICSNPRHKQRQG.

Belongs to the bacterial ribosomal protein bL36 family.

It is found in the plastid. It localises to the chloroplast. This Lactuca sativa (Garden lettuce) protein is Large ribosomal subunit protein bL36c.